Reading from the N-terminus, the 1559-residue chain is Arginine-glutamic acid dipeptide repeats protein (1559 aa).

Basic and acidic residues predominate over residues 1–36 (MTADKDKDKDKEKDRDRDRDRERDKRDKARESENAR). A disordered region spans residues 1-89 (MTADKDKDKD…KKKSRYERTD (89 aa)). Phosphoserine is present on residues S53 and S56. Over residues 73–84 (KSRKKPPKKKSR) the composition is skewed to basic residues. In terms of domain architecture, BAH spans 102–282 (VVYRPGDCVY…PETRRLNSTQ (181 aa)). T119 carries the post-translational modification Phosphothreonine. S141 and S303 each carry phosphoserine. The region spanning 283 to 386 (GEIRVGPSHQ…KALQRLVKKP (104 aa)) is the ELM2 domain. The SANT domain maps to 390–442 (LIEKCWTEDEVKRFVKGLRQYGKNFFRIRKELLPNKETGELITFYYYWKKTPE). The disordered stretch occupies residues 463–494 (TRTASTPVNTPSRPPSSEFLDLSSASEDDFDS). The segment covering 464 to 473 (RTASTPVNTP) has biased composition (polar residues). Positions 478–487 (SSEFLDLSSA) are enriched in low complexity. The GATA-type zinc-finger motif lies at 507-532 (RHCFTTTSKDWHHGGRENILLCTDCR). The interval 541 to 1125 (LPPIEKPVDP…PSHASQSARF (585 aa)) is disordered. K559 is covalently cross-linked (Glycyl lysine isopeptide (Lys-Gly) (interchain with G-Cter in SUMO2)). S593, S599, and S612 each carry phosphoserine. Residues 608–622 (SGRNSPSAASTSSND) show a composition bias toward low complexity. Positions 623–639 (SKAEAVKKSAKKVKEEA) are enriched in basic and acidic residues. Residue K636 forms a Glycyl lysine isopeptide (Lys-Gly) (interchain with G-Cter in SUMO2) linkage. S641, S655, S674, and S678 each carry phosphoserine. Positions 651 to 672 (EKVASDTEDTDRATSKKTKTQE) are enriched in basic and acidic residues. Basic and acidic residues predominate over residues 687 to 707 (SDSRSVNDEGSSDPKDIDQDN). Residues 708–735 (RSTSPSIPSPQDNESDSDSSAQQQMLQT) show a composition bias toward polar residues. Positions 736 to 761 (QPPALQAPSGAASAPSTAPPGTTQLP) are enriched in low complexity. A compositionally biased stretch (polar residues) spans 768–791 (SATTVPPQGSPATSQPPNQTQSTV). Residues 805–822 (LHPPRLPSPHPPLQPMTA) show a composition bias toward pro residues. Over residues 890 to 900 (QLPASQSALQP) the composition is skewed to low complexity. The segment covering 901 to 931 (QQPPREQPLPPAPLAMPHIKPPPTTPIPQLP) has biased composition (pro residues). A compositionally biased stretch (low complexity) spans 961 to 971 (KPLSSLSTHHP). Residues 1027–1053 (PQHPFVPGGPPPITPPSCPPTSTPPAG) show a composition bias toward pro residues. Residues 1054-1068 (PSSSSQPPCSAAVSS) are compositionally biased toward low complexity. Phosphoserine is present on residues S1098, S1105, and S1107. The segment covering 1098–1109 (SPPPPPRSPSPE) has biased composition (pro residues). T1111 carries the post-translational modification Phosphothreonine. The stretch at 1148 to 1205 (GSKLAKKREEAIEKAKREAEQKAREEREREKEKEKEREREREREREAERAAQKASSSA) forms a coiled coil. The residue at position 1150 (K1150) is an N6-acetyllysine. Over residues 1154–1198 (KREEAIEKAKREAEQKAREEREREKEKEKEREREREREREAERAA) the composition is skewed to basic and acidic residues. The tract at residues 1154–1239 (KREEAIEKAK…TTIAAVPPYI (86 aa)) is disordered. Residue Y1252 is modified to Phosphotyrosine. S1259 is modified (phosphoserine).

Interacts with HDAC1 and ATN1. Interaction with ATN1 is improved when the poly-Gln region of ATN1 is extended. Widely expressed.

It localises to the nucleus. The protein localises to the PML body. Functionally, plays a role as a transcriptional repressor during development. May play a role in the control of cell survival. Interacts with FAT1. The sequence is that of Arginine-glutamic acid dipeptide repeats protein (Rere) from Rattus norvegicus (Rat).